Reading from the N-terminus, the 109-residue chain is Beta-keratin-related protein (109 aa).

An N-acetylserine modification is found at S2.

Belongs to the avian keratin family.

The sequence is that of Beta-keratin-related protein (BKJ) from Coturnix japonica (Japanese quail).